Consider the following 75-residue polypeptide: Conotoxin Vn5.5 (75 aa).

Positions 1–19 (MLCLPVFIILLLLASPAAP) are cleaved as a signal peptide. Residues 20–59 (NPLEKRIQSDLIRAALEDADMKTDEREIVNIIDSISDVAK) constitute a propeptide that is removed on maturation. At glutamine 60 the chain carries Pyrrolidone carboxylic acid.

Belongs to the conotoxin T superfamily. In terms of processing, contains 2 disulfide bonds that can be either 'C1-C3, C2-C4' or 'C1-C4, C2-C3', since these disulfide connectivities have been observed for conotoxins with cysteine framework V (for examples, see AC P0DQQ7 and AC P81755). As to expression, expressed by the venom duct.

It localises to the secreted. The sequence is that of Conotoxin Vn5.5 from Conus ventricosus (Mediterranean cone).